The following is a 722-amino-acid chain: Disintegrin and metalloproteinase domain-containing protein 21 (722 aa).

An N-terminal signal peptide occupies residues methionine 1 to alanine 31. Positions glycine 32–glutamate 196 are excised as a propeptide. N-linked (GlcNAc...) asparagine glycosylation is present at asparagine 164. Positions methionine 171–lysine 178 match the Cysteine switch motif. Residue cysteine 173 participates in Zn(2+) binding. Topologically, residues proline 197–glycine 681 are extracellular. The Peptidase M12B domain occupies tryptophan 208 to proline 398. An N-linked (GlcNAc...) asparagine glycan is attached at asparagine 227. Cystine bridges form between cysteine 316-cysteine 393, cysteine 356-cysteine 378, and cysteine 358-cysteine 363. Position 341 (histidine 341) interacts with Zn(2+). Glutamate 342 is a catalytic residue. Histidine 345 and histidine 351 together coordinate Zn(2+). N-linked (GlcNAc...) asparagine glycans are attached at residues asparagine 377, asparagine 437, asparagine 478, asparagine 546, and asparagine 600. One can recognise a Disintegrin domain in the interval leucine 406–aspartate 492. The cysteines at positions 464 and 484 are disulfide-linked. Intrachain disulfides connect cysteine 634–cysteine 645, cysteine 639–cysteine 651, and cysteine 653–cysteine 662. Residues cysteine 634–glutamine 663 enclose the EGF-like domain. The chain crosses the membrane as a helical span at residues valine 682–glycine 702. Residues leucine 703 to glycine 722 are Cytoplasmic-facing.

Requires Zn(2+) as cofactor. Has no obvious cleavage site for furin endopeptidase, suggesting that the proteolytic processing is regulated.

The protein resides in the membrane. Its function is as follows. May be involved in sperm maturation and/or fertilization. May also be involved in epithelia functions associated with establishing and maintaining gradients of ions or nutrients. This chain is Disintegrin and metalloproteinase domain-containing protein 21 (ADAM21), found in Homo sapiens (Human).